A 364-amino-acid polypeptide reads, in one-letter code: Peptide chain release factor 2 (364 aa).

Glutamine 251 carries the post-translational modification N5-methylglutamine.

The protein belongs to the prokaryotic/mitochondrial release factor family. In terms of processing, methylated by PrmC. Methylation increases the termination efficiency of RF2.

The protein localises to the cytoplasm. In terms of biological role, peptide chain release factor 2 directs the termination of translation in response to the peptide chain termination codons UGA and UAA. This is Peptide chain release factor 2 from Sulfurovum sp. (strain NBC37-1).